We begin with the raw amino-acid sequence, 60 residues long: Large ribosomal subunit protein uL30 (60 aa).

Belongs to the universal ribosomal protein uL30 family. In terms of assembly, part of the 50S ribosomal subunit.

The sequence is that of Large ribosomal subunit protein uL30 from Burkholderia mallei (strain NCTC 10247).